A 444-amino-acid polypeptide reads, in one-letter code: Glutamate-1-semialdehyde 2,1-aminomutase (444 aa).

At lysine 278 the chain carries N6-(pyridoxal phosphate)lysine.

Belongs to the class-III pyridoxal-phosphate-dependent aminotransferase family. HemL subfamily. As to quaternary structure, homodimer. It depends on pyridoxal 5'-phosphate as a cofactor.

Its subcellular location is the cytoplasm. The enzyme catalyses (S)-4-amino-5-oxopentanoate = 5-aminolevulinate. The protein operates within porphyrin-containing compound metabolism; protoporphyrin-IX biosynthesis; 5-aminolevulinate from L-glutamyl-tRNA(Glu): step 2/2. The protein is Glutamate-1-semialdehyde 2,1-aminomutase of Deinococcus radiodurans (strain ATCC 13939 / DSM 20539 / JCM 16871 / CCUG 27074 / LMG 4051 / NBRC 15346 / NCIMB 9279 / VKM B-1422 / R1).